The chain runs to 271 residues: uncharacterized protein (271 aa).

This sequence belongs to the metallo-dependent hydrolases superfamily. Peptidase M19 family.

This is an uncharacterized protein from Klebsiella pneumoniae.